Consider the following 306-residue polypeptide: Putative S-adenosyl-L-methionine-dependent methyltransferase MAV_4442 (306 aa).

S-adenosyl-L-methionine-binding positions include aspartate 129 and 158 to 159 (DL).

Belongs to the UPF0677 family.

Functionally, exhibits S-adenosyl-L-methionine-dependent methyltransferase activity. The chain is Putative S-adenosyl-L-methionine-dependent methyltransferase MAV_4442 from Mycobacterium avium (strain 104).